Here is a 277-residue protein sequence, read N- to C-terminus: Inhibition of morphological differentiation protein (277 aa).

Positions 18, 20, and 192 each coordinate Mg(2+).

This sequence belongs to the HAD-like hydrolase superfamily. SerB family.

The polypeptide is Inhibition of morphological differentiation protein (Streptomyces azureus).